Here is a 356-residue protein sequence, read N- to C-terminus: Branched-chain-amino-acid aminotransferase 6 (356 aa).

Position 199 is an N6-(pyridoxal phosphate)lysine (Lys199).

The protein belongs to the class-IV pyridoxal-phosphate-dependent aminotransferase family. The cofactor is pyridoxal 5'-phosphate.

Its subcellular location is the cytoplasm. It carries out the reaction L-leucine + 2-oxoglutarate = 4-methyl-2-oxopentanoate + L-glutamate. The enzyme catalyses L-isoleucine + 2-oxoglutarate = (S)-3-methyl-2-oxopentanoate + L-glutamate. The catalysed reaction is L-valine + 2-oxoglutarate = 3-methyl-2-oxobutanoate + L-glutamate. It participates in amino-acid biosynthesis; L-isoleucine biosynthesis; L-isoleucine from 2-oxobutanoate: step 4/4. The protein operates within amino-acid biosynthesis; L-leucine biosynthesis; L-leucine from 3-methyl-2-oxobutanoate: step 4/4. Its pathway is amino-acid biosynthesis; L-valine biosynthesis; L-valine from pyruvate: step 4/4. Functionally, converts 2-oxo acids to branched-chain amino acids. Acts on leucine, isoleucine and valine. The sequence is that of Branched-chain-amino-acid aminotransferase 6 (BCAT6) from Arabidopsis thaliana (Mouse-ear cress).